Here is a 401-residue protein sequence, read N- to C-terminus: Phosphoglycerate kinase (401 aa).

Substrate-binding positions include 20–22 (DFN), arginine 35, 58–61 (HLGR), arginine 117, and arginine 154. Residues lysine 204, glycine 298, glutamate 329, and 358 to 361 (GGDS) each bind ATP.

The protein belongs to the phosphoglycerate kinase family. In terms of assembly, monomer.

The protein resides in the cytoplasm. The catalysed reaction is (2R)-3-phosphoglycerate + ATP = (2R)-3-phospho-glyceroyl phosphate + ADP. It participates in carbohydrate degradation; glycolysis; pyruvate from D-glyceraldehyde 3-phosphate: step 2/5. The polypeptide is Phosphoglycerate kinase (Bifidobacterium adolescentis (strain ATCC 15703 / DSM 20083 / NCTC 11814 / E194a)).